The following is a 108-amino-acid chain: Biogenesis of lysosome-related organelles complex 1 subunit CNL1 (108 aa).

This sequence belongs to the BLOC1S4 family. Component of the biogenesis of lysosome-related organelles complex-1 (BLOC-1).

Its subcellular location is the cytoplasm. Functionally, component of the biogenesis of lysosome-related organelles complex-1 (BLOC-1), a complex that is involved in endosomal cargo sorting. This is Biogenesis of lysosome-related organelles complex 1 subunit CNL1 (CLN1) from Zygosaccharomyces rouxii (strain ATCC 2623 / CBS 732 / NBRC 1130 / NCYC 568 / NRRL Y-229).